The following is an 898-amino-acid chain: Nitrate reductase [NAD(P)H] (898 aa).

The segment covering 1-15 has biased composition (basic and acidic residues); the sequence is MAASVENRRFTHHEP. The segment at 1-65 is disordered; the sequence is MAASVENRRF…SSSEDENEND (65 aa). Cys180 is a Mo-molybdopterin binding site. The region spanning 528–603 is the Cytochrome b5 heme-binding domain; sequence SKMFSMSEVK…LEDYRIGELI (76 aa). Heme contacts are provided by His563 and His586. The region spanning 642–754 is the FAD-binding FR-type domain; sequence GAKIPTKLVY…KGPLGHVEYT (113 aa). FAD is bound by residues 694–697, 711–715, Phe716, Phe723, 728–730, and Thr781; these read RAYT, VVKIY, and LMS.

This sequence belongs to the nitrate reductase family. Homodimer. Requires FAD as cofactor. The cofactor is heme. Mo-molybdopterin serves as cofactor.

The enzyme catalyses nitrite + NAD(+) + H2O = nitrate + NADH + H(+). It carries out the reaction nitrite + NADP(+) + H2O = nitrate + NADPH + H(+). In terms of biological role, nitrate reductase is a key enzyme involved in the first step of nitrate assimilation in plants, fungi and bacteria. The chain is Nitrate reductase [NAD(P)H] (NIA1) from Betula pendula (European white birch).